Reading from the N-terminus, the 238-residue chain is Ribitol-5-phosphate cytidylyltransferase 2 (238 aa).

CTP is bound by residues 7 to 10 (LAGG) and 81 to 87 (GTDRNET).

This sequence belongs to the IspD/TarI cytidylyltransferase family. TarI subfamily.

It carries out the reaction D-ribitol 5-phosphate + CTP + H(+) = CDP-L-ribitol + diphosphate. The protein operates within cell wall biogenesis; poly(ribitol phosphate) teichoic acid biosynthesis. Its function is as follows. Catalyzes the transfer of the cytidylyl group of CTP to D-ribitol 5-phosphate. This Staphylococcus aureus (strain MSSA476) protein is Ribitol-5-phosphate cytidylyltransferase 2.